The chain runs to 896 residues: DNA mismatch repair protein MutS (896 aa).

607 to 614 contributes to the ATP binding site; that stretch reads GPNMSGKS. Residues 809-835 are disordered; that stretch reads ANSVAPNTAASMPVEAADESQPVESET.

Belongs to the DNA mismatch repair MutS family.

In terms of biological role, this protein is involved in the repair of mismatches in DNA. It is possible that it carries out the mismatch recognition step. This protein has a weak ATPase activity. The sequence is that of DNA mismatch repair protein MutS from Lactiplantibacillus plantarum (strain ATCC BAA-793 / NCIMB 8826 / WCFS1) (Lactobacillus plantarum).